A 240-amino-acid polypeptide reads, in one-letter code: EFPDYEQPIERTVVEYPSLRDIFAWEPPTSNSIGLTWQRHAFPGVEREVLTLKAVPTSEPNNTKTAYAKLGSGKVTLDGLKPNATYLVTATANISGDTILVLSNTFHTLANGTNIINNIFHWGPVTNQSIQVRWDQIKPEETSALIVTLTAEMASDPGVERSESALFGKGKVTVDGLESDTLYIATVMVFRNGRQYFNSTRDIRTLKSGHKEVTVVTTSGSGIASTILGLLLTCVALVLA.

Fibronectin type-III domains lie at 1-109 (EFPD…FHTL) and 110-210 (ANGT…KSGH).

This Taenia ovis (Sheep tapeworm) protein is 45 kDa antigen.